Consider the following 233-residue polypeptide: Phosphatidylserine decarboxylase proenzyme (233 aa).

S188 functions as the Schiff-base intermediate with substrate; via pyruvic acid in the catalytic mechanism. A Pyruvic acid (Ser); by autocatalysis modification is found at S188.

Belongs to the phosphatidylserine decarboxylase family. PSD-A subfamily. In terms of assembly, heterodimer of a large membrane-associated beta subunit and a small pyruvoyl-containing alpha subunit. The cofactor is pyruvate. Post-translationally, is synthesized initially as an inactive proenzyme. Formation of the active enzyme involves a self-maturation process in which the active site pyruvoyl group is generated from an internal serine residue via an autocatalytic post-translational modification. Two non-identical subunits are generated from the proenzyme in this reaction, and the pyruvate is formed at the N-terminus of the alpha chain, which is derived from the carboxyl end of the proenzyme. The post-translation cleavage follows an unusual pathway, termed non-hydrolytic serinolysis, in which the side chain hydroxyl group of the serine supplies its oxygen atom to form the C-terminus of the beta chain, while the remainder of the serine residue undergoes an oxidative deamination to produce ammonia and the pyruvoyl prosthetic group on the alpha chain.

It is found in the cell membrane. It catalyses the reaction a 1,2-diacyl-sn-glycero-3-phospho-L-serine + H(+) = a 1,2-diacyl-sn-glycero-3-phosphoethanolamine + CO2. It functions in the pathway phospholipid metabolism; phosphatidylethanolamine biosynthesis; phosphatidylethanolamine from CDP-diacylglycerol: step 2/2. Catalyzes the formation of phosphatidylethanolamine (PtdEtn) from phosphatidylserine (PtdSer). The protein is Phosphatidylserine decarboxylase proenzyme of Ruegeria sp. (strain TM1040) (Silicibacter sp.).